We begin with the raw amino-acid sequence, 1373 residues long: DNA-directed RNA polymerase subunit beta (1373 aa).

It belongs to the RNA polymerase beta chain family. In terms of assembly, the RNAP catalytic core consists of 2 alpha, 1 beta, 1 beta' and 1 omega subunit. When a sigma factor is associated with the core the holoenzyme is formed, which can initiate transcription.

The enzyme catalyses RNA(n) + a ribonucleoside 5'-triphosphate = RNA(n+1) + diphosphate. Its function is as follows. DNA-dependent RNA polymerase catalyzes the transcription of DNA into RNA using the four ribonucleoside triphosphates as substrates. This Lawsonia intracellularis (strain PHE/MN1-00) protein is DNA-directed RNA polymerase subunit beta.